The sequence spans 232 residues: Clarin-1 (232 aa).

A helical transmembrane segment spans residues isoleucine 8–leucine 28. N-linked (GlcNAc...) asparagine glycosylation occurs at asparagine 48. Transmembrane regions (helical) follow at residues valine 101–tyrosine 121, leucine 135–phenylalanine 155, and threonine 186–isoleucine 206.

This sequence belongs to the clarin family. In terms of tissue distribution, widely expressed. Found in the retina.

The protein resides in the cell membrane. Its function is as follows. May have a role in the excitatory ribbon synapse junctions between hair cells and cochlear ganglion cells and presumably also in analogous synapses within the retina. The sequence is that of Clarin-1 (CLRN1) from Homo sapiens (Human).